Reading from the N-terminus, the 560-residue chain is Dihydroxy-acid dehydratase (560 aa).

A [2Fe-2S] cluster-binding site is contributed by Cys-52. Asp-84 is a binding site for Mg(2+). Cys-125 provides a ligand contact to [2Fe-2S] cluster. Mg(2+)-binding residues include Asp-126 and Lys-127. Position 127 is an N6-carboxylysine (Lys-127). [2Fe-2S] cluster is bound at residue Cys-197. Glu-448 provides a ligand contact to Mg(2+). Ser-474 acts as the Proton acceptor in catalysis.

It belongs to the IlvD/Edd family. In terms of assembly, homodimer. [2Fe-2S] cluster serves as cofactor. It depends on Mg(2+) as a cofactor.

The enzyme catalyses (2R)-2,3-dihydroxy-3-methylbutanoate = 3-methyl-2-oxobutanoate + H2O. It catalyses the reaction (2R,3R)-2,3-dihydroxy-3-methylpentanoate = (S)-3-methyl-2-oxopentanoate + H2O. The protein operates within amino-acid biosynthesis; L-isoleucine biosynthesis; L-isoleucine from 2-oxobutanoate: step 3/4. It functions in the pathway amino-acid biosynthesis; L-valine biosynthesis; L-valine from pyruvate: step 3/4. Functions in the biosynthesis of branched-chain amino acids. Catalyzes the dehydration of (2R,3R)-2,3-dihydroxy-3-methylpentanoate (2,3-dihydroxy-3-methylvalerate) into 2-oxo-3-methylpentanoate (2-oxo-3-methylvalerate) and of (2R)-2,3-dihydroxy-3-methylbutanoate (2,3-dihydroxyisovalerate) into 2-oxo-3-methylbutanoate (2-oxoisovalerate), the penultimate precursor to L-isoleucine and L-valine, respectively. This Leptospira borgpetersenii serovar Hardjo-bovis (strain JB197) protein is Dihydroxy-acid dehydratase.